We begin with the raw amino-acid sequence, 302 residues long: UDP-3-O-acyl-N-acetylglucosamine deacetylase (302 aa).

Residues histidine 78, histidine 237, and aspartate 241 each contribute to the Zn(2+) site. Histidine 264 functions as the Proton donor in the catalytic mechanism.

This sequence belongs to the LpxC family. Requires Zn(2+) as cofactor.

It catalyses the reaction a UDP-3-O-[(3R)-3-hydroxyacyl]-N-acetyl-alpha-D-glucosamine + H2O = a UDP-3-O-[(3R)-3-hydroxyacyl]-alpha-D-glucosamine + acetate. Its pathway is glycolipid biosynthesis; lipid IV(A) biosynthesis; lipid IV(A) from (3R)-3-hydroxytetradecanoyl-[acyl-carrier-protein] and UDP-N-acetyl-alpha-D-glucosamine: step 2/6. Its function is as follows. Catalyzes the hydrolysis of UDP-3-O-myristoyl-N-acetylglucosamine to form UDP-3-O-myristoylglucosamine and acetate, the committed step in lipid A biosynthesis. In Hahella chejuensis (strain KCTC 2396), this protein is UDP-3-O-acyl-N-acetylglucosamine deacetylase.